We begin with the raw amino-acid sequence, 151 residues long: Prefoldin subunit alpha (151 aa).

Belongs to the prefoldin subunit alpha family. As to quaternary structure, heterohexamer of two alpha and four beta subunits.

The protein localises to the cytoplasm. Functionally, molecular chaperone capable of stabilizing a range of proteins. Seems to fulfill an ATP-independent, HSP70-like function in archaeal de novo protein folding. The sequence is that of Prefoldin subunit alpha from Sulfurisphaera tokodaii (strain DSM 16993 / JCM 10545 / NBRC 100140 / 7) (Sulfolobus tokodaii).